A 302-amino-acid chain; its full sequence is Acetylglutamate kinase (302 aa).

Substrate contacts are provided by residues G68–G69, R90, and N195.

It belongs to the acetylglutamate kinase family. ArgB subfamily.

The protein resides in the cytoplasm. It catalyses the reaction N-acetyl-L-glutamate + ATP = N-acetyl-L-glutamyl 5-phosphate + ADP. Its pathway is amino-acid biosynthesis; L-arginine biosynthesis; N(2)-acetyl-L-ornithine from L-glutamate: step 2/4. In terms of biological role, catalyzes the ATP-dependent phosphorylation of N-acetyl-L-glutamate. The protein is Acetylglutamate kinase of Marinomonas sp. (strain MWYL1).